The following is a 1252-amino-acid chain: DNA-directed RNA polymerase subunit beta (1252 aa).

It belongs to the RNA polymerase beta chain family. As to quaternary structure, the RNAP catalytic core consists of 2 alpha, 1 beta, 1 beta' and 1 omega subunit. When a sigma factor is associated with the core the holoenzyme is formed, which can initiate transcription.

The enzyme catalyses RNA(n) + a ribonucleoside 5'-triphosphate = RNA(n+1) + diphosphate. Its function is as follows. DNA-dependent RNA polymerase catalyzes the transcription of DNA into RNA using the four ribonucleoside triphosphates as substrates. The polypeptide is DNA-directed RNA polymerase subunit beta (Chlamydia felis (strain Fe/C-56) (Chlamydophila felis)).